We begin with the raw amino-acid sequence, 535 residues long: Interferon lambda receptor 1 (535 aa).

The N-terminal stretch at 1 to 20 (MWRADRWAPLLLFLLQSALG) is a signal peptide. The Extracellular portion of the chain corresponds to 21-227 (RPRLAPPRNV…FLEAPGDKRA (207 aa)). The Fibronectin type-III domain maps to 26–121 (PPRNVTLFSQ…ESRYLEYLFD (96 aa)). 3 N-linked (GlcNAc...) asparagine glycosylation sites follow: asparagine 29, asparagine 36, and asparagine 52. 3 cysteine pairs are disulfide-bonded: cysteine 73–cysteine 81, cysteine 85–cysteine 149, and cysteine 194–cysteine 216. Asparagine 141 carries N-linked (GlcNAc...) asparagine glycosylation. Residues 228–248 (VLAMPSLLLLLIAAVAAGVAW) traverse the membrane as a helical segment. Over 249-535 (KIMKGNPWFQ…GRMLGDYLVR (287 aa)) the chain is Cytoplasmic. 2 disordered regions span residues 301-419 (NRPA…APCG) and 478-520 (VNNP…SSVQ). The span at 321–336 (STEDEDEDTDYDDDGD) shows a compositional bias: acidic residues. The segment covering 350-360 (EKPRVMEHSET) has biased composition (basic and acidic residues). Low complexity predominate over residues 376–396 (GSDGSSAWDSSDRSWSSTGDS). Over residues 397–414 (SYKDEVGSSSCLDRKEPD) the composition is skewed to basic and acidic residues. Over residues 482-503 (EGEEEQEDEEEEEEEEEEEDWE) the composition is skewed to acidic residues.

This sequence belongs to the type II cytokine receptor family. In terms of assembly, heterodimer with IL10RB. Post-translationally, ubiquitinated by FBXO45-containing E3 ligase leading to proteasomal degradation.

Its subcellular location is the membrane. The IFNLR1/IL10RB dimer is a receptor for the cytokine ligands IFNL2 and IFNL3 and mediates their antiviral activity. The ligand/receptor complex stimulate the activation of the JAK/STAT signaling pathway leading to the expression of IFN-stimulated genes (ISG), which contribute to the antiviral state. Determines the cell type specificity of the lambda interferon action. Shows a more restricted pattern of expression in the epithelial tissues thereby limiting responses to lambda interferons primarily to epithelial cells of the respiratory, gastrointestinal, and reproductive tracts. Seems not to be essential for early virus-activated host defense in vaginal infection, but plays an important role in Toll-like receptor (TLR)-induced antiviral defense. Plays a significant role in the antiviral immune defense in the intestinal epithelium. This Mus musculus (Mouse) protein is Interferon lambda receptor 1 (Ifnlr1).